A 335-amino-acid polypeptide reads, in one-letter code: Ethanol acetyltransferase 1 (335 aa).

The AB hydrolase-1 domain occupies 48 to 300 (PIVFVHGIFG…NSAHDILDQR (253 aa)). Catalysis depends on charge relay system residues Ser-121, Asp-145, and His-294.

Belongs to the AB hydrolase superfamily.

It localises to the mitochondrion. The enzyme catalyses ethanol + acetyl-CoA = ethyl acetate + CoA. It carries out the reaction acetyl-CoA + H2O = acetate + CoA + H(+). The catalysed reaction is ethyl acetate + H2O = ethanol + acetate + H(+). Its function is as follows. Alcohol acetyltransferase that catalyzes the synthesis of ethyl acetate from ethanol and acetyl-CoA. Can also function as a thioesterase by hydrolyzing acetyl-CoA in the absence of ethanol, as well as esterase hydrolyzing ethyl acetate. This is Ethanol acetyltransferase 1 (EAT1) from Cyberlindnera fabianii (Yeast).